Consider the following 223-residue polypeptide: Thiopurine S-methyltransferase (223 aa).

Tryptophan 10, leucine 45, glutamate 66, and arginine 127 together coordinate S-adenosyl-L-methionine.

It belongs to the class I-like SAM-binding methyltransferase superfamily. TPMT family.

The protein resides in the cytoplasm. The enzyme catalyses S-adenosyl-L-methionine + a thiopurine = S-adenosyl-L-homocysteine + a thiopurine S-methylether.. The sequence is that of Thiopurine S-methyltransferase from Shewanella woodyi (strain ATCC 51908 / MS32).